The sequence spans 927 residues: MTANAELLQGSLFGDLEPQANAESCSETITRALRNDLSDQELVDESLKRPRNRHKPTSVPSIPLDSESQEQLETADNDNDLPAWAHHTLVDPEQLTPMLRHYVELKAKHPERILLYRLGDFFECFFEDAIQLSRLLELTLTGKEGGKGIGRVPMAGVPHHAAERYCTELIRHGLSVAICDQLETTPSKGALLKRDITRVLTPGTVLAEGMLTARRNNWLAAVVVEPAQGNQPFCWGLANADVSTGEFLVTQREGSAELHQHLAQLEASELIMAQKIGESSRPAWCPEQLFLTTMATTPFSQPEAERTLLNHYRLSTLDGLGLQEVPLALRAAGGLLTYLRDTQPLAENVDEGIAPMPLEHPLTVFAGDALVLDAQTRRNLELTSTQRDGQFQGSLLWAVDRTLTAMGARCLRRWIEAPLLDSKAIRARQAVVNHLVETRSLRHSLRRLLRPMGDLERLAGRAGAGHAGARELVAIADGIERLPRLAEQLHNALRSAPNWLDNLLTLDKSLPKLAASIREQLINNPPLSLSEGGLMHDNVDPLLDGLRNQLDDQDTWLAGQEVQERKLSGNPNLRLQYHRTFGYFLAVSKAKASMVPDHWIRRQTLANEERFITPDLKTREGQIFQLRARACQREYELFCQLREQVGKQATSIRKAARAVAGLDALVGLAEVAATGDYCCPEIDNSRELQLKTCRHPVVEQLLVERSFIPNDVELGKDIDLVVLTGPNASGKSCYLRQIGLIQLLAQVGSWVPAKQARVGIADRIFTRVGAVDDLAAGQSTFMVEMAETANILHHASDRSLVLLDEIGRGTATFDGLSIAWAVSEHLARDLRSRTVFATHYHELNGLSQELTNVANSQVLVEETGDDLVFLHQVAAGGANRSYGIEAARLAGVPDDVVQRARQVLAQLHDDDSSLPALLSAKTIKRQS.

Residues Asp44–Asp80 are disordered. Acidic residues predominate over residues Glu67–Asn79. Residue Gly725–Ser732 participates in ATP binding.

The protein belongs to the DNA mismatch repair MutS family.

Functionally, this protein is involved in the repair of mismatches in DNA. It is possible that it carries out the mismatch recognition step. This protein has a weak ATPase activity. In Prochlorococcus marinus (strain MIT 9303), this protein is DNA mismatch repair protein MutS.